Here is a 413-residue protein sequence, read N- to C-terminus: Gamma-glutamyl phosphate reductase (413 aa).

This sequence belongs to the gamma-glutamyl phosphate reductase family.

The protein resides in the cytoplasm. It carries out the reaction L-glutamate 5-semialdehyde + phosphate + NADP(+) = L-glutamyl 5-phosphate + NADPH + H(+). It participates in amino-acid biosynthesis; L-proline biosynthesis; L-glutamate 5-semialdehyde from L-glutamate: step 2/2. Its function is as follows. Catalyzes the NADPH-dependent reduction of L-glutamate 5-phosphate into L-glutamate 5-semialdehyde and phosphate. The product spontaneously undergoes cyclization to form 1-pyrroline-5-carboxylate. The polypeptide is Gamma-glutamyl phosphate reductase (Salinispora arenicola (strain CNS-205)).